A 297-amino-acid polypeptide reads, in one-letter code: Nucleotide-binding protein DSY4845 (297 aa).

Position 13–20 (13–20 (GLSGAGKT)) interacts with ATP. A GTP-binding site is contributed by 64-67 (DLRG).

This sequence belongs to the RapZ-like family.

Functionally, displays ATPase and GTPase activities. The polypeptide is Nucleotide-binding protein DSY4845 (Desulfitobacterium hafniense (strain Y51)).